Consider the following 93-residue polypeptide: uncharacterized protein (93 aa).

This is an uncharacterized protein from Acidianus sp. F28 (AFV-2).